Reading from the N-terminus, the 89-residue chain is Large ribosomal subunit protein L37-2 (89 aa).

4 residues coordinate Zn(2+): C19, C22, C34, and C37. The C4-type zinc-finger motif lies at 19–37 (CRRCGNSSYHLQKSKCSQC).

It belongs to the eukaryotic ribosomal protein eL37 family. It depends on Zn(2+) as a cofactor.

Functionally, binds to the 23S rRNA. The polypeptide is Large ribosomal subunit protein L37-2 (Drosophila melanogaster (Fruit fly)).